The following is a 201-amino-acid chain: Recombination protein RecR (201 aa).

Residues 60-75 (CHACGNVDTSDPCTIC) form a C4-type zinc finger. The Toprim domain maps to 83-178 (TTLVVVEDVS…TITRLAHGVP (96 aa)).

This sequence belongs to the RecR family.

May play a role in DNA repair. It seems to be involved in an RecBC-independent recombinational process of DNA repair. It may act with RecF and RecO. This Methylorubrum populi (strain ATCC BAA-705 / NCIMB 13946 / BJ001) (Methylobacterium populi) protein is Recombination protein RecR.